The chain runs to 160 residues: Phosphopantetheine adenylyltransferase (160 aa).

T10 contributes to the substrate binding site. ATP-binding positions include 10 to 11 (TF) and H18. Substrate contacts are provided by K42, M74, and R88. ATP-binding positions include 89 to 91 (GLR), E99, and 124 to 130 (LSFLSSS).

The protein belongs to the bacterial CoaD family. In terms of assembly, homohexamer. Mg(2+) serves as cofactor.

The protein localises to the cytoplasm. The enzyme catalyses (R)-4'-phosphopantetheine + ATP + H(+) = 3'-dephospho-CoA + diphosphate. It participates in cofactor biosynthesis; coenzyme A biosynthesis; CoA from (R)-pantothenate: step 4/5. Functionally, reversibly transfers an adenylyl group from ATP to 4'-phosphopantetheine, yielding dephospho-CoA (dPCoA) and pyrophosphate. The protein is Phosphopantetheine adenylyltransferase of Photorhabdus laumondii subsp. laumondii (strain DSM 15139 / CIP 105565 / TT01) (Photorhabdus luminescens subsp. laumondii).